The primary structure comprises 160 residues: Anaerobic nitrite reductase HBII (160 aa).

Residues 8–157 (GFTEEQEALV…LVAAIKLEMK (150 aa)) enclose the Globin domain. The short motif at 41–45 (EIAPS) is the Homodimerization element. Residues Ser-51, Lys-65, His-69, Lys-99, Ser-103, and His-104 each contribute to the heme b site. The Homodimerization signature appears at 111 to 123 (DEHFEVTKFALLE).

Belongs to the plant globin family. In terms of assembly, homodimer. The cofactor is heme b.

The protein resides in the cytoplasm. It is found in the nucleus. The catalysed reaction is Fe(III)-heme b-[protein] + nitric oxide + H2O = Fe(II)-heme b-[protein] + nitrite + 2 H(+). Phytoglobin that reduces nitrite to nitric oxide (NO) under anoxic conditions (e.g. during flooding or in waterlogged soil) and upon root nodulation. Required for general plant development and during nodulation, especially for the onset of symbiosis. Monitors nitric oxide (NO) levels during early phase of the nitrogen-fixing symbiosis and buffers oxygen in functioning nodules. May not function as an oxygen storage or transport protein. Has an unusually high affinity for O(2) through a hexacoordinate heme iron because of a very low dissociation constant. This is Anaerobic nitrite reductase HBII from Casuarina glauca (Swamp oak).